We begin with the raw amino-acid sequence, 346 residues long: DNA-directed RNA polymerases I and III subunit RPAC1 (346 aa).

Ala2 carries the N-acetylalanine modification.

It belongs to the archaeal Rpo3/eukaryotic RPB3 RNA polymerase subunit family. As to quaternary structure, component of the RNA polymerase I and RNA polymerase III complexes consisting of at least 13 and 17 subunits, respectively. Pol I complex consists of a ten-subunit catalytic core composed of POLR1A/RPA1, POLR1B/RPA2, POLR1C/RPAC1, POLR1D/RPAC2, POLR1H/RPA12, POLR2E/RPABC1, POLR2F/RPABC2, POLR2H/RPABC3, POLR2K/RPABC4 and POLR2L/RPABC5; a mobile stalk subunit POLR1F/RPA43 protruding from the core and additional subunits homologous to general transcription factors POLR1E/RPA49 and POLR1G/RPA34. Part of Pol I pre-initiation complex (PIC), in which Pol I core assembles with RRN3 and promoter-bound UTBF and SL1/TIF-IB complex. Pol III complex consists of a ten-subunit catalytic core composed of POLR3A/RPC1, POLR3B/RPC2, POLR1C/RPAC1, POLR1D/RPAC2, POLR3K/RPC10, POLR2E/RPABC1, POLR2F/RPABC2, POLR2H/RPABC3, POLR2K/RPABC4 and POLR2L/RPABC5; a mobile stalk composed of two subunits POLR3H/RPC8 and CRCP/RPC9, protruding from the core and functioning primarily in transcription initiation; and additional subunits homologous to general transcription factors of the RNA polymerase II machinery, POLR3C/RPC3-POLR3F/RPC6-POLR3G/RPC7 heterotrimer required for transcription initiation and POLR3D/RPC4-POLR3E/RPC5 heterodimer involved in both transcription initiation and termination.

It is found in the nucleus. The protein localises to the cytoplasm. Its subcellular location is the cytosol. Functionally, DNA-dependent RNA polymerase catalyzes the transcription of DNA into RNA using the four ribonucleoside triphosphates as substrates. Common component of RNA polymerases I and III which synthesize ribosomal RNA precursors and short non-coding RNAs including 5S rRNA, snRNAs, tRNAs and miRNAs, respectively. POLR1C/RPAC1 is part of the polymerase core and may function as a clamp element that moves to open and close the cleft. This Mus musculus (Mouse) protein is DNA-directed RNA polymerases I and III subunit RPAC1.